The sequence spans 252 residues: Geranylgeranylglyceryl phosphate synthase (252 aa).

Residues aspartate 27 and threonine 57 each contribute to the Mg(2+) site. Residues 175–181 (YLEAGSG), 206–207 (GG), and 228–229 (GN) each bind sn-glycerol 1-phosphate.

The protein belongs to the GGGP/HepGP synthase family. Group II subfamily. Mg(2+) is required as a cofactor.

It localises to the cytoplasm. It catalyses the reaction sn-glycerol 1-phosphate + (2E,6E,10E)-geranylgeranyl diphosphate = sn-3-O-(geranylgeranyl)glycerol 1-phosphate + diphosphate. The protein operates within membrane lipid metabolism; glycerophospholipid metabolism. Functionally, prenyltransferase that catalyzes the transfer of the geranylgeranyl moiety of geranylgeranyl diphosphate (GGPP) to the C3 hydroxyl of sn-glycerol-1-phosphate (G1P). This reaction is the first ether-bond-formation step in the biosynthesis of archaeal membrane lipids. The polypeptide is Geranylgeranylglyceryl phosphate synthase (Metallosphaera sedula (strain ATCC 51363 / DSM 5348 / JCM 9185 / NBRC 15509 / TH2)).